The chain runs to 20 residues: Brevinin-1SPd (20 aa).

Cysteine 14 and cysteine 20 are disulfide-bonded.

In terms of tissue distribution, expressed by the skin glands.

Its subcellular location is the secreted. Its function is as follows. Antimicrobial peptide with activity against Gram-negative and Gram-positive bacteria (MIC=13 uM against E.coli, MIC=3 uM against S.aureus) and fungi (MIC=3 uM against C.albicans). Shows hemolytic activity on human erythrocytes (HC(50)=8 uM). In Lithobates septentrionalis (Mink frog), this protein is Brevinin-1SPd.